A 518-amino-acid chain; its full sequence is Apolipoprotein N-acyltransferase (518 aa).

6 helical membrane passes run 22-42 (LAFI…LWII), 63-83 (FFHW…WVHV), 101-121 (ALLA…LAWF), 134-154 (LLFP…LTGF), 174-194 (IIGA…LALC), and 202-222 (LLIL…LSQI). The region spanning 234-484 (VQGNIPQSMK…TGVLSATIPL (251 aa)) is the CN hydrolase domain. E273 acts as the Proton acceptor in catalysis. K343 is a catalytic residue. The active-site Nucleophile is C395. Residues 492-512 (AKIGQTPLLILCGALLLVGFI) traverse the membrane as a helical segment.

The protein belongs to the CN hydrolase family. Apolipoprotein N-acyltransferase subfamily.

It is found in the cell inner membrane. The enzyme catalyses N-terminal S-1,2-diacyl-sn-glyceryl-L-cysteinyl-[lipoprotein] + a glycerophospholipid = N-acyl-S-1,2-diacyl-sn-glyceryl-L-cysteinyl-[lipoprotein] + a 2-acyl-sn-glycero-3-phospholipid + H(+). Its pathway is protein modification; lipoprotein biosynthesis (N-acyl transfer). Functionally, catalyzes the phospholipid dependent N-acylation of the N-terminal cysteine of apolipoprotein, the last step in lipoprotein maturation. This chain is Apolipoprotein N-acyltransferase, found in Shewanella oneidensis (strain ATCC 700550 / JCM 31522 / CIP 106686 / LMG 19005 / NCIMB 14063 / MR-1).